A 790-amino-acid chain; its full sequence is Pentatricopeptide repeat-containing protein At1g25360 (790 aa).

PPR repeat units lie at residues 48–82, 84–109, 112–146, 147–182, 183–217, 218–248, 250–284, 285–315, 319–349, 350–384, 385–415, 416–450, 451–481, 482–516, 517–551, and 553–583; these read RAHI…DKIA, TTMV…APVC, DTVM…GFKP, DNFT…GAGY, ITSV…ILEK, DERS…MDDN, KLVA…GIEL, DEFT…VLRR, SFHF…MPAK, DLVS…NILS, WMIM…GFEP, CDYA…GFDS, SLSA…MPCL, DSVS…GIRP, DRIT…YRIP, and GADH…LPFK. The segment at 588–663 is type E motif; sequence IWEALLSGCR…EVACSWIEME (76 aa). The tract at residues 664–694 is type E(+) motif; the sequence is TQVHTFLVDDTSHPEAEAVYIYLQDLGKEMR. Residues 695-790 form a type DYW motif region; it reads RLGYVPDTSF…NGECSCGNFW (96 aa).

Belongs to the PPR family. PCMP-H subfamily.

The sequence is that of Pentatricopeptide repeat-containing protein At1g25360 (PCMP-H74) from Arabidopsis thaliana (Mouse-ear cress).